The sequence spans 391 residues: Ferrochelatase (391 aa).

The Fe cation site is built by H196 and E281.

The protein belongs to the ferrochelatase family.

The protein resides in the cytoplasm. The catalysed reaction is heme b + 2 H(+) = protoporphyrin IX + Fe(2+). It participates in porphyrin-containing compound metabolism; protoheme biosynthesis; protoheme from protoporphyrin-IX: step 1/1. Functionally, catalyzes the ferrous insertion into protoporphyrin IX. The chain is Ferrochelatase from Prochlorococcus marinus (strain SARG / CCMP1375 / SS120).